We begin with the raw amino-acid sequence, 258 residues long: Acyl-[acyl-carrier-protein]--UDP-N-acetylglucosamine O-acyltransferase (258 aa).

Belongs to the transferase hexapeptide repeat family. LpxA subfamily. As to quaternary structure, homotrimer.

It is found in the cytoplasm. The catalysed reaction is a (3R)-hydroxyacyl-[ACP] + UDP-N-acetyl-alpha-D-glucosamine = a UDP-3-O-[(3R)-3-hydroxyacyl]-N-acetyl-alpha-D-glucosamine + holo-[ACP]. The protein operates within glycolipid biosynthesis; lipid IV(A) biosynthesis; lipid IV(A) from (3R)-3-hydroxytetradecanoyl-[acyl-carrier-protein] and UDP-N-acetyl-alpha-D-glucosamine: step 1/6. Its function is as follows. Involved in the biosynthesis of lipid A, a phosphorylated glycolipid that anchors the lipopolysaccharide to the outer membrane of the cell. In Thermodesulfovibrio yellowstonii (strain ATCC 51303 / DSM 11347 / YP87), this protein is Acyl-[acyl-carrier-protein]--UDP-N-acetylglucosamine O-acyltransferase.